The chain runs to 424 residues: L-glutamine:2-deoxy-scyllo-inosose aminotransferase (424 aa).

At lysine 202 the chain carries N6-(pyridoxal phosphate)lysine.

The protein belongs to the DegT/DnrJ/EryC1 family. L-glutamine:2-deoxy-scyllo-inosose/scyllo-inosose aminotransferase subfamily. Requires pyridoxal 5'-phosphate as cofactor.

It carries out the reaction 2-deoxy-L-scyllo-inosose + L-glutamine = 2-deoxy-scyllo-inosamine + 2-oxoglutaramate. It catalyses the reaction 3-amino-2,3-dideoxy-scyllo-inosose + L-glutamine = 2-deoxystreptamine + 2-oxoglutaramate. Its pathway is metabolic intermediate biosynthesis; 2-deoxystreptamine biosynthesis; 2-deoxystreptamine from D-glucose 6-phosphate: step 2/4. It functions in the pathway antibiotic biosynthesis; lividomycin biosynthesis. In terms of biological role, catalyzes the PLP-dependent transamination of 2-deoxy-scyllo-inosose (2-DOI) to form 2-deoxy-scyllo-inosamine (2-DOIA) using L-glutamine as the amino donor. Also catalyzes the transamination of 3-amino-2,3-dideoxy-scyllo-inosose (keto-2-DOIA) into 2-deoxystreptamine (2-DOS). This chain is L-glutamine:2-deoxy-scyllo-inosose aminotransferase (livS), found in Streptomyces lividus.